Reading from the N-terminus, the 375-residue chain is Arsenite methyltransferase (375 aa).

Position 335 is a phosphoserine (Ser335).

The protein belongs to the methyltransferase superfamily. Arsenite methyltransferase family.

It is found in the cytoplasm. It localises to the cytosol. The catalysed reaction is arsenic triglutathione + [thioredoxin]-dithiol + S-adenosyl-L-methionine + 2 H2O = methylarsonous acid + [thioredoxin]-disulfide + 3 glutathione + S-adenosyl-L-homocysteine + H(+). It catalyses the reaction arsenic triglutathione + 2 [thioredoxin]-dithiol + 2 S-adenosyl-L-methionine + H2O = dimethylarsinous acid + 2 [thioredoxin]-disulfide + 3 glutathione + 2 S-adenosyl-L-homocysteine + 2 H(+). The enzyme catalyses arsenic triglutathione + 3 [thioredoxin]-dithiol + 3 S-adenosyl-L-methionine = trimethylarsine + 3 [thioredoxin]-disulfide + 3 glutathione + 3 S-adenosyl-L-homocysteine + 3 H(+). In terms of biological role, catalyzes the transfer of a methyl group from AdoMet to trivalent arsenicals producing methylated and dimethylated arsenicals. It methylates arsenite to form methylarsonate, Me-AsO(3)H(2), which is reduced by methylarsonate reductase to methylarsonite, Me-As(OH)2. Methylarsonite is also a substrate and it is converted into the much less toxic compound dimethylarsinate (cacodylate), Me(2)As(O)-OH. This Homo sapiens (Human) protein is Arsenite methyltransferase (AS3MT).